The primary structure comprises 221 residues: Glutathione S-transferase 1 (221 aa).

A GST N-terminal domain is found at 7-88 (QKMQLYSFSL…YLEEKFPENP (82 aa)). Glutathione contacts are provided by residues 17 to 22 (SSCAWR), valine 60, 72 to 73 (DS), glutamine 112, and 116 to 118 (NLA). The GST C-terminal domain maps to 93–221 (DLQKRALNYQ…ISPMLDEAKS (129 aa)).

The protein belongs to the GST superfamily. Zeta family.

It carries out the reaction RX + glutathione = an S-substituted glutathione + a halide anion + H(+). Conjugation of reduced glutathione to a wide number of exogenous and endogenous hydrophobic electrophiles. The chain is Glutathione S-transferase 1 (GST1) from Dianthus caryophyllus (Carnation).